Reading from the N-terminus, the 380-residue chain is MRNCKMARVASVLGLVMLSVALLILSLISYVSLKKENIFTTPKYASPGAPRMYMFHAGFRSQFALKFLDPSFVPITNSLTQELQEKPSKWKFNRTAFLHQRQEILQHVDVIKNFSLTKNSVRIGQLMHYDYSSHKYVFSISNNFRSLLPDVSPIMNKHYNICAVVGNSGILTGSQCGQEIDKSDFVFRCNFAPTEAFQRDVGRKTNLTTFNPSILEKYYNNLLTIQDRNNFFLSLKKLDGAILWIPAFFFHTSATVTRTLVDFFVEHRGQLKVQLAWPGNIMQHVNRYWKNKHLSPKRLSTGILMYTLASAICEEIHLYGFWPFGFDPNTREDLPYHYYDKKGTKFTTKWQESHQLPAEFQLLYRMHGEGLTKLTLSHCA.

Over 1 to 9 the chain is Cytoplasmic; the sequence is MRNCKMARV. A helical; Signal-anchor for type II membrane protein transmembrane segment spans residues 10-33; it reads ASVLGLVMLSVALLILSLISYVSL. Residues 34-380 lie on the Lumenal side of the membrane; the sequence is KKENIFTTPK…LTKLTLSHCA (347 aa). Residues N93, N113, and N160 are each glycosylated (N-linked (GlcNAc...) asparagine). 2 disulfides stabilise this stretch: C162-C313 and C176-C379. 2 residues coordinate CMP-N-acetyl-beta-neuraminate: N167 and N190. N206 is a glycosylation site (N-linked (GlcNAc...) asparagine). The CMP-N-acetyl-beta-neuraminate site is built by S300, T301, G302, W322, Y336, and H337. Residue H354 is the Proton donor/acceptor of the active site.

The protein belongs to the glycosyltransferase 29 family. In terms of assembly, homodimer. In terms of processing, autopolysialylated. As to expression, expressed in fetal and adult brain and fetal liver.

The protein localises to the golgi apparatus membrane. The catalysed reaction is [N-acetyl-alpha-D-neuraminosyl-(2-&gt;8)](n) + CMP-N-acetyl-beta-neuraminate = [N-acetyl-alpha-D-neuraminosyl-(2-&gt;8)](n+1) + CMP + H(+). It catalyses the reaction alpha-Neu5Ac-(2-&gt;3)-beta-D-Gal-(1-&gt;4)-6S-D-GlcNAc + CMP-N-acetyl-beta-neuraminate = alpha-Neu5Ac-(2-&gt;8)-alpha-Neu5Ac-(2-&gt;3)-beta-D-Gal-(1-&gt;4)-6S-D-GlcNAc + CMP + H(+). It carries out the reaction a ganglioside GM3 (d18:1(4E)) + CMP-N-acetyl-beta-neuraminate = a ganglioside GD3 (d18:1(4E)) + CMP + H(+). The enzyme catalyses a ganglioside GM3 + CMP-N-acetyl-beta-neuraminate = a ganglioside GD3 + CMP + H(+). The catalysed reaction is an N-acetyl-alpha-neuraminyl-(2-&gt;3)-beta-D-galactosyl derivative + CMP-N-acetyl-beta-neuraminate = an N-acetyl-alpha-neuraminyl-(2-&gt;8)-N-acetyl-alpha-neuraminyl-(2-&gt;3)-beta-D-galactosyl derivative + CMP + H(+). It catalyses the reaction an N-acetyl-alpha-neuraminyl-(2-&gt;3)-beta-D-galactosyl-(1-&gt;4)-N-acetyl-beta-D-glucosaminyl derivative + CMP-N-acetyl-beta-neuraminate = an alpha-Neu5Ac-(2-&gt;8)-alpha-Neu5Ac-(2-&gt;3)-beta-D-Gal-(1-&gt;4)-beta-D-GlcNAc derivative + CMP + H(+). The protein operates within protein modification; protein glycosylation. Catalyzes the transfer of sialic acid from a CMP-linked sialic acid donor onto a terminal alpha-2,3-, alpha-2,6-, or alpha-2,8-linked sialic acid of an acceptor, such as N-linked oligosaccharides of glycoproteins and glycolipids through alpha-2,8-linkages. Forms oligosialic and polysialic acid on various sialylated N-acetyllactosamine oligosaccharides of glycoproteins, including FETUB N-glycans, a2-HS-glycoprotein (AHSG) and alpha 2,3-sialylated glycosphingolipids, such as alpha 2,3-sialylparagloboside and ganglioside GM3 and to a lesser extent NCAM1 N-glycans. However, it is much more specific to N-linked oligosaccharides of glycoproteins than glycosphingolipids. 2,3-sialylparagloboside serves as the best acceptor substrate among the glycolipids. alpha-Neu5Ac-(2-&gt;8)-alpha-Neu5Ac-(2-&gt;3)-beta-D-Gal-(1-&gt;4)-6S-D-GlcNAc and monosialyl and disialyl N-acetyllactosamines are the best acceptor substrates among glycoproteins. May plays critical role in the striatum by mediating the formation of disialylated and trisialylated terminal glycotopes on N- and O-glycans of specific striatal proteins, regulating their distribution in lipid rafts, affecting their interaction with other binding partners, and subsequently modulating striatal functions. The chain is Alpha-N-acetylneuraminate alpha-2,8-sialyltransferase ST8SIA3 from Homo sapiens (Human).